A 65-amino-acid chain; its full sequence is Large ribosomal subunit protein bL35 (65 aa).

It belongs to the bacterial ribosomal protein bL35 family.

The protein is Large ribosomal subunit protein bL35 of Clostridium acetobutylicum (strain ATCC 824 / DSM 792 / JCM 1419 / IAM 19013 / LMG 5710 / NBRC 13948 / NRRL B-527 / VKM B-1787 / 2291 / W).